A 248-amino-acid chain; its full sequence is E3 ubiquitin-protein ligase BIG BROTHER (248 aa).

An RING-type; atypical zinc finger spans residues 197–238 (CVICQLKYKIGERQMNLPCKHVYHSECISKWLSINKVCPVCN).

Interacts with the E2 ubiquitin conjugating enzyme UBC10 via the RING domain. Interacts with DA1. Post-translationally, auto-ubiquitinated. In terms of tissue distribution, mostly expressed in inflorescence, and, to a lower extent, in seedlings, roots, stems, leaves and siliques.

The catalysed reaction is S-ubiquitinyl-[E2 ubiquitin-conjugating enzyme]-L-cysteine + [acceptor protein]-L-lysine = [E2 ubiquitin-conjugating enzyme]-L-cysteine + N(6)-ubiquitinyl-[acceptor protein]-L-lysine.. It participates in protein modification; protein ubiquitination. In terms of biological role, E3 ubiquitin-protein ligase that limits organ size, and possibly seed size, in a dose-dependent manner. Negatively regulates the duration of cell proliferation in leaves and petals independently of the major phytohormones (e.g. auxin, cytokinin, gibberellin, brassinosteroids, ethylene, abscisic acid, jasmonic acid), probably by targeting growth stimulators for degradation. Limits the proliferation of root meristematic cells. Polyubiquitinates DA1. Involved in the promotion of leaf senescence, in addition to its function in restricting plant growth. Possesses E3 ubiquitin-protein ligase activity in vitro. The protein is E3 ubiquitin-protein ligase BIG BROTHER (BB) of Arabidopsis thaliana (Mouse-ear cress).